Reading from the N-terminus, the 81-residue chain is Photosystem I iron-sulfur center (81 aa).

2 consecutive 4Fe-4S ferredoxin-type domains span residues 2 to 31 (SHSVKIYDTCIGCTQCVRACPLDVLEMVPW) and 37 to 68 (GQIASSPRTEDCVGCKRCETACPTDFLSIRVY). [4Fe-4S] cluster-binding residues include Cys11, Cys14, Cys17, Cys21, Cys48, Cys51, Cys54, and Cys58.

As to quaternary structure, the cyanobacterial PSI reaction center is composed of one copy each of PsaA,B,C,D,E,F,I,J,K,L,M and X, and forms trimeric complexes. [4Fe-4S] cluster is required as a cofactor.

It localises to the cellular thylakoid membrane. The catalysed reaction is reduced [plastocyanin] + hnu + oxidized [2Fe-2S]-[ferredoxin] = oxidized [plastocyanin] + reduced [2Fe-2S]-[ferredoxin]. Its function is as follows. Apoprotein for the two 4Fe-4S centers FA and FB of photosystem I (PSI); essential for photochemical activity. FB is the terminal electron acceptor of PSI, donating electrons to ferredoxin. The C-terminus interacts with PsaA/B/D and helps assemble the protein into the PSI complex. Required for binding of PsaD and PsaE to PSI. PSI is a plastocyanin/cytochrome c6-ferredoxin oxidoreductase, converting photonic excitation into a charge separation, which transfers an electron from the donor P700 chlorophyll pair to the spectroscopically characterized acceptors A0, A1, FX, FA and FB in turn. Functionally, mutant proteins with a 3Fe-4S center are not observed bound to PSI in vitro, and are probably not able to do so in vivo. This chain is Photosystem I iron-sulfur center (psaC), found in Picosynechococcus sp. (strain ATCC 27264 / PCC 7002 / PR-6) (Agmenellum quadruplicatum).